The chain runs to 414 residues: Esterase FrsA (414 aa).

This sequence belongs to the FrsA family.

It catalyses the reaction a carboxylic ester + H2O = an alcohol + a carboxylate + H(+). In terms of biological role, catalyzes the hydrolysis of esters. This Shigella sonnei (strain Ss046) protein is Esterase FrsA.